The chain runs to 168 residues: Secreted RxLR effector protein RXLR-C06 (168 aa).

Positions 1–22 (MRIQLLWLSFAVLSTILSTCDA) are cleaved as a signal peptide. Positions 25 to 52 (DKLDPQRVQPNQNGSGHNQSIRSALKTS) are disordered. Residues 32 to 50 (VQPNQNGSGHNQSIRSALK) show a composition bias toward polar residues. N-linked (GlcNAc...) asparagine glycans are attached at residues N37 and N42. The RxLR-dEER motif lies at 46–63 (RSALKTSHGKTIADDEER). Positions 78–107 (YKAIVAKLSKYFRDYHERREIRKQRILNKS) constitute an IQ domain. N105 is a glycosylation site (N-linked (GlcNAc...) asparagine).

It belongs to the RxLR effector family.

Its subcellular location is the secreted. It localises to the host Golgi apparatus. Its function is as follows. Secreted effector that suppresses pattern-triggered immunity (PTI) in plant host. The protein is Secreted RxLR effector protein RXLR-C06 of Plasmopara halstedii (Downy mildew of sunflower).